Reading from the N-terminus, the 141-residue chain is Lutropin subunit beta (141 aa).

Positions 1-20 are cleaved as a signal peptide; sequence MEMLQGLLLWLLLSVAGVWA. Ser-21 is subject to Blocked amino end (Ser). Cystine bridges form between Cys-29/Cys-77, Cys-43/Cys-92, Cys-46/Cys-130, Cys-54/Cys-108, Cys-58/Cys-110, and Cys-113/Cys-120. Asn-33 carries an N-linked (GlcNAc...) asparagine glycan.

It belongs to the glycoprotein hormones subunit beta family. Heterodimer of a common alpha chain and a unique beta chain which confers biological specificity to thyrotropin, lutropin, follitropin and gonadotropin.

The protein localises to the secreted. Promotes spermatogenesis and ovulation by stimulating the testes and ovaries to synthesize steroids. This Sus scrofa (Pig) protein is Lutropin subunit beta (LHB).